The following is a 365-amino-acid chain: Flagellar P-ring protein 2 (365 aa).

Residues 1 to 19 (MKKWIVMASLLLAALPAMS) form the signal peptide.

It belongs to the FlgI family. In terms of assembly, the basal body constitutes a major portion of the flagellar organelle and consists of four rings (L,P,S, and M) mounted on a central rod.

The protein resides in the periplasm. Its subcellular location is the bacterial flagellum basal body. In terms of biological role, assembles around the rod to form the L-ring and probably protects the motor/basal body from shearing forces during rotation. In Chromobacterium violaceum (strain ATCC 12472 / DSM 30191 / JCM 1249 / CCUG 213 / NBRC 12614 / NCIMB 9131 / NCTC 9757 / MK), this protein is Flagellar P-ring protein 2.